A 507-amino-acid chain; its full sequence is Maturase K (507 aa).

Belongs to the intron maturase 2 family. MatK subfamily.

The protein resides in the plastid. The protein localises to the chloroplast. In terms of biological role, usually encoded in the trnK tRNA gene intron. Probably assists in splicing its own and other chloroplast group II introns. The polypeptide is Maturase K (Umbellularia californica (California bay laurel)).